The sequence spans 370 residues: Putative glutamate--cysteine ligase 2 (370 aa).

It belongs to the glutamate--cysteine ligase type 2 family. YbdK subfamily.

The enzyme catalyses L-cysteine + L-glutamate + ATP = gamma-L-glutamyl-L-cysteine + ADP + phosphate + H(+). Its function is as follows. ATP-dependent carboxylate-amine ligase which exhibits weak glutamate--cysteine ligase activity. The chain is Putative glutamate--cysteine ligase 2 from Methylibium petroleiphilum (strain ATCC BAA-1232 / LMG 22953 / PM1).